A 289-amino-acid chain; its full sequence is Protease HtpX homolog (289 aa).

Helical transmembrane passes span 3–23 (IVGT…WFFF) and 28–48 (TILA…YKVG). Position 129 (H129) interacts with Zn(2+). E130 is a catalytic residue. H133 serves as a coordination point for Zn(2+). 2 consecutive transmembrane segments (helical) span residues 144–164 (LGQG…LFSG) and 172–192 (FLAI…VLAI). Zn(2+) is bound at residue E197. The interval 222–250 (SQGNEQAAQQQRQRTSRGRGRRQRGQRND) is disordered. Residues 235 to 246 (RTSRGRGRRQRG) are compositionally biased toward basic residues.

The protein belongs to the peptidase M48B family. It depends on Zn(2+) as a cofactor.

It localises to the cell membrane. The sequence is that of Protease HtpX homolog from Halobacterium salinarum (strain ATCC 700922 / JCM 11081 / NRC-1) (Halobacterium halobium).